A 222-amino-acid chain; its full sequence is 7-cyano-7-deazaguanine synthase (222 aa).

8–18 (LSGGLDSTTCL) is an ATP binding site. Zn(2+) contacts are provided by Cys-186, Cys-194, Cys-197, and Cys-200.

It belongs to the QueC family. As to quaternary structure, homodimer. It depends on Zn(2+) as a cofactor.

The enzyme catalyses 7-carboxy-7-deazaguanine + NH4(+) + ATP = 7-cyano-7-deazaguanine + ADP + phosphate + H2O + H(+). It participates in purine metabolism; 7-cyano-7-deazaguanine biosynthesis. Catalyzes the ATP-dependent conversion of 7-carboxy-7-deazaguanine (CDG) to 7-cyano-7-deazaguanine (preQ(0)). The sequence is that of 7-cyano-7-deazaguanine synthase from Acetivibrio thermocellus (strain ATCC 27405 / DSM 1237 / JCM 9322 / NBRC 103400 / NCIMB 10682 / NRRL B-4536 / VPI 7372) (Clostridium thermocellum).